We begin with the raw amino-acid sequence, 199 residues long: Thymidine kinase (199 aa).

ATP contacts are provided by residues 9–16 and 93–96; these read GAMSSGKS and DEAQ. Glu94 serves as the catalytic Proton acceptor. Zn(2+) is bound by residues Cys151, Cys154, Cys188, and His191.

Belongs to the thymidine kinase family. Homotetramer.

Its subcellular location is the cytoplasm. The catalysed reaction is thymidine + ATP = dTMP + ADP + H(+). This chain is Thymidine kinase, found in Lactobacillus johnsonii (strain CNCM I-12250 / La1 / NCC 533).